We begin with the raw amino-acid sequence, 161 residues long: TRAF-interacting protein with FHA domain-containing protein B (161 aa).

One can recognise an FHA domain in the interval 36–91 (LLLGRGQDAHLQLQLPRLSRRHLSLEPYLEKGSALLAFCLKALSRKGCVWVNGLTL).

As to quaternary structure, interacts with TIFA.

Inhibits TIFA-mediated TRAF6 activation possibly by inducing a conformational change in TIFA. This chain is TRAF-interacting protein with FHA domain-containing protein B, found in Homo sapiens (Human).